The chain runs to 335 residues: Nucleoid-associated protein PSEEN4449 (335 aa).

The protein belongs to the YejK family.

Its subcellular location is the cytoplasm. It is found in the nucleoid. This Pseudomonas entomophila (strain L48) protein is Nucleoid-associated protein PSEEN4449.